The primary structure comprises 126 residues: Mating-type protein A1 (126 aa).

A DNA-binding region (homeobox) is located at residues 70–126 (SPKGKSSISPQARAFLEQVFRRKQSLNSKEKEEVAKKCGITPLQVRVWFINKRMRSK).

It belongs to the MATA1 family. In terms of assembly, binds DNA with a high specificity as a heterodimer of A1 and ALPHA2.

The protein resides in the nucleus. Functionally, mating type proteins are sequence specific DNA-binding proteins that act as master switches in yeast differentiation by controlling gene expression in a cell type-specific fashion. Transcriptional corepressor that, in a/alpha diploid cells, binds cooperatively with the ALPHA2 protein to a 21-bp DNA sequence termed the haploid-specific gene (hsg) operator, to repress transcription of haploid-specific genes and of MATALPHA1. The protein is Mating-type protein A1 (MATA1) of Saccharomyces cerevisiae (Baker's yeast).